Here is a 109-residue protein sequence, read N- to C-terminus: Nucleoid-associated protein Shal_1591 (109 aa).

The interval 87 to 109 is disordered; that stretch reads NQKEKMAEVTGGMQLPPGMKMPF.

This sequence belongs to the YbaB/EbfC family. Homodimer.

The protein resides in the cytoplasm. Its subcellular location is the nucleoid. Its function is as follows. Binds to DNA and alters its conformation. May be involved in regulation of gene expression, nucleoid organization and DNA protection. The sequence is that of Nucleoid-associated protein Shal_1591 from Shewanella halifaxensis (strain HAW-EB4).